The following is a 107-amino-acid chain: Iron-sulfur cluster assembly protein CyaY (107 aa).

This sequence belongs to the frataxin family.

Its function is as follows. Involved in iron-sulfur (Fe-S) cluster assembly. May act as a regulator of Fe-S biogenesis. This chain is Iron-sulfur cluster assembly protein CyaY, found in Edwardsiella ictaluri (strain 93-146).